We begin with the raw amino-acid sequence, 257 residues long: UPF0246 protein BPP3440 (257 aa).

Belongs to the UPF0246 family.

This is UPF0246 protein BPP3440 from Bordetella parapertussis (strain 12822 / ATCC BAA-587 / NCTC 13253).